We begin with the raw amino-acid sequence, 168 residues long: Photosystem I assembly protein Ycf3 (168 aa).

3 TPR repeats span residues 35 to 68 (AFTY…EIDP), 72 to 105 (SYIL…NPFL), and 120 to 153 (GEQA…TPGN).

This sequence belongs to the Ycf3 family.

It localises to the plastid. The protein localises to the chloroplast thylakoid membrane. In terms of biological role, essential for the assembly of the photosystem I (PSI) complex. May act as a chaperone-like factor to guide the assembly of the PSI subunits. This chain is Photosystem I assembly protein Ycf3, found in Oenothera elata subsp. hookeri (Hooker's evening primrose).